The primary structure comprises 205 residues: High frequency lysogenization protein HflD homolog (205 aa).

The protein belongs to the HflD family.

It localises to the cytoplasm. It is found in the cell inner membrane. This Photobacterium profundum (strain SS9) protein is High frequency lysogenization protein HflD homolog.